The following is a 489-amino-acid chain: Potassium voltage-gated channel subfamily A member 7 (489 aa).

The chain crosses the membrane as a helical span at residues 176–196 (VLAVVSVLVILVSIVVFCLET). Asn224 is a glycosylation site (N-linked (GlcNAc...) asparagine). Residues 242–262 (FFVVETLCICWFSFELLVRLV) traverse the membrane as a helical segment. Cys264 is lipidated: S-palmitoyl cysteine. The helical transmembrane segment at 274-294 (VMNLIDFVAILPYFVALGTEL) threads the bilayer. Residues 309 to 328 (ILRVIRLVRVFRIFKLSRHS) form a helical; Voltage-sensor membrane-spanning segment. Residues 345-365 (LGLLIFFLFIGVVLFSSAVYF) traverse the membrane as a helical segment. The Selectivity filter motif lies at 391–396 (TVGYGD). Residues 406–426 (IVGSLCAIAGVLTISLPVPVI) traverse the membrane as a helical segment.

Belongs to the potassium channel family. A (Shaker) (TC 1.A.1.2) subfamily. Kv1.7/KCNA7 sub-subfamily. Heterotetramer of potassium channel proteins. As to expression, detected in heart, skeletal muscle, brain, and pancreatic islet cells.

The protein localises to the membrane. The enzyme catalyses K(+)(in) = K(+)(out). Functionally, mediates the voltage-dependent potassium ion permeability of excitable membranes. Assuming opened or closed conformations in response to the voltage difference across the membrane, the protein forms a potassium-selective channel through which potassium ions may pass in accordance with their electrochemical gradient. Channels formed by isoform 1 inactivate faster than channels formed by isoform 2. This chain is Potassium voltage-gated channel subfamily A member 7 (Kcna7), found in Mus musculus (Mouse).